The primary structure comprises 148 residues: 3-dehydroquinate dehydratase (148 aa).

The active-site Proton acceptor is Tyr-23. Substrate-binding residues include Asn-75, His-81, and Asp-88. The active-site Proton donor is His-101. Residues Leu-102 to Ser-103 and Arg-112 each bind substrate.

This sequence belongs to the type-II 3-dehydroquinase family. In terms of assembly, homododecamer.

The enzyme catalyses 3-dehydroquinate = 3-dehydroshikimate + H2O. The protein operates within metabolic intermediate biosynthesis; chorismate biosynthesis; chorismate from D-erythrose 4-phosphate and phosphoenolpyruvate: step 3/7. Its function is as follows. Catalyzes a trans-dehydration via an enolate intermediate. In Cellvibrio japonicus (strain Ueda107) (Pseudomonas fluorescens subsp. cellulosa), this protein is 3-dehydroquinate dehydratase.